We begin with the raw amino-acid sequence, 512 residues long: Glutamyl-tRNA(Gln) amidotransferase subunit A (512 aa).

Active-site charge relay system residues include lysine 82 and serine 157. Serine 181 serves as the catalytic Acyl-ester intermediate.

The protein belongs to the amidase family. GatA subfamily. In terms of assembly, heterotrimer of A, B and C subunits.

The enzyme catalyses L-glutamyl-tRNA(Gln) + L-glutamine + ATP + H2O = L-glutaminyl-tRNA(Gln) + L-glutamate + ADP + phosphate + H(+). Its function is as follows. Allows the formation of correctly charged Gln-tRNA(Gln) through the transamidation of misacylated Glu-tRNA(Gln) in organisms which lack glutaminyl-tRNA synthetase. The reaction takes place in the presence of glutamine and ATP through an activated gamma-phospho-Glu-tRNA(Gln). This chain is Glutamyl-tRNA(Gln) amidotransferase subunit A, found in Bordetella petrii (strain ATCC BAA-461 / DSM 12804 / CCUG 43448).